Here is a 200-residue protein sequence, read N- to C-terminus: dTTP/UTP pyrophosphatase (200 aa).

The Proton acceptor role is filled by D73.

It belongs to the Maf family. YhdE subfamily. A divalent metal cation is required as a cofactor.

It is found in the cytoplasm. It catalyses the reaction dTTP + H2O = dTMP + diphosphate + H(+). The enzyme catalyses UTP + H2O = UMP + diphosphate + H(+). Its function is as follows. Nucleoside triphosphate pyrophosphatase that hydrolyzes dTTP and UTP. May have a dual role in cell division arrest and in preventing the incorporation of modified nucleotides into cellular nucleic acids. This Chromohalobacter salexigens (strain ATCC BAA-138 / DSM 3043 / CIP 106854 / NCIMB 13768 / 1H11) protein is dTTP/UTP pyrophosphatase.